The sequence spans 159 residues: Ribosomal RNA large subunit methyltransferase H (159 aa).

Residues Leu76, Gly108, and 127-132 (FGLLTL) contribute to the S-adenosyl-L-methionine site.

It belongs to the RNA methyltransferase RlmH family. Homodimer.

Its subcellular location is the cytoplasm. It carries out the reaction pseudouridine(1915) in 23S rRNA + S-adenosyl-L-methionine = N(3)-methylpseudouridine(1915) in 23S rRNA + S-adenosyl-L-homocysteine + H(+). Functionally, specifically methylates the pseudouridine at position 1915 (m3Psi1915) in 23S rRNA. In Streptococcus agalactiae serotype Ia (strain ATCC 27591 / A909 / CDC SS700), this protein is Ribosomal RNA large subunit methyltransferase H.